Here is a 383-residue protein sequence, read N- to C-terminus: MRFKILQKDGLARTGIIETQRGIIHTPAFMPVGTNGTVKAMTPEEVRQIGYEIILSNTYHLYLRPGHETIKMIGGIHKFINWHCPILTDSGGFQIYSLASLRKITLEGVEFRSHIDGSLHFINPEKAIDIQLALGSDIMMVLDECIPYPADEEYVEKSIKLTTEWAKRCKEHFEKQDTYQALFGIIQGGVFSDLRIRALEELLKIDFHGYAIGGLSVGEPKTDMYKIVKDISPLMPEDKPHYLMGVGDLIDVLHAVEHGIDMFDCVIPTRNARNGTLFTSQGRISIKRSEFKEDLSPLDPDCDCYTCKNYSRAFLRHLYTCREILSMRLNTIHNLYFYCRFFEKMRQAIAERRFQEFKKEWLPVLEKNFYQESNDFHHSLENY.

The active-site Proton acceptor is Asp89. Substrate is bound by residues 89-93 (DSGGF), Asp143, Gln187, and Gly214. The tract at residues 245–251 (GVGDLID) is RNA binding. The active-site Nucleophile is Asp264. The tract at residues 269–273 (TRNAR) is RNA binding; important for wobble base 34 recognition. Cys302, Cys304, Cys307, and His333 together coordinate Zn(2+).

It belongs to the queuine tRNA-ribosyltransferase family. In terms of assembly, homodimer. Within each dimer, one monomer is responsible for RNA recognition and catalysis, while the other monomer binds to the replacement base PreQ1. It depends on Zn(2+) as a cofactor.

It carries out the reaction 7-aminomethyl-7-carbaguanine + guanosine(34) in tRNA = 7-aminomethyl-7-carbaguanosine(34) in tRNA + guanine. The protein operates within tRNA modification; tRNA-queuosine biosynthesis. Catalyzes the base-exchange of a guanine (G) residue with the queuine precursor 7-aminomethyl-7-deazaguanine (PreQ1) at position 34 (anticodon wobble position) in tRNAs with GU(N) anticodons (tRNA-Asp, -Asn, -His and -Tyr). Catalysis occurs through a double-displacement mechanism. The nucleophile active site attacks the C1' of nucleotide 34 to detach the guanine base from the RNA, forming a covalent enzyme-RNA intermediate. The proton acceptor active site deprotonates the incoming PreQ1, allowing a nucleophilic attack on the C1' of the ribose to form the product. After dissociation, two additional enzymatic reactions on the tRNA convert PreQ1 to queuine (Q), resulting in the hypermodified nucleoside queuosine (7-(((4,5-cis-dihydroxy-2-cyclopenten-1-yl)amino)methyl)-7-deazaguanosine). The protein is Queuine tRNA-ribosyltransferase of Thermodesulfovibrio yellowstonii (strain ATCC 51303 / DSM 11347 / YP87).